The chain runs to 420 residues: MLKHLKQVDQEVFEAVSKEFKRQQEHLEMIASENYTSYAVMEAQGSVLTNKYAEGLPHKRYYGGCEYVDIVEDLAIERLKKIYGAEHANVQPHSGSQANQAVYFSQLQAGDTIMGMSLAHGGHLTHGAKVNLSGIVFNAVQYGVNPETELIDYDQVYKLAKEHKPKMIVAGASAYSRIIDWAKFREIADEVGALLMVDMAHYAGLIAGGAYPSPVPYADFVTSTTHKTLRGPRGGFILSKAQYGKDIDKWVFPRLQGGPLMHVIAAKAVAFKEAMTEEFREYAHQTVKNAKVLAEELKAEGLRIVSGGTDSHIVLVDLRPLNVKGNQAEEALGRANITVNKNAIPFDPEKPMVTSGIRLGTAALTTRGMKENDMRRIAKNIVKVLKNLDNEKIIQEVKDDVLSLCSSYPLYPEWTEYYLD.

Residues leucine 118 and 122–124 (GHL) contribute to the (6S)-5,6,7,8-tetrahydrofolate site. Lysine 227 carries the post-translational modification N6-(pyridoxal phosphate)lysine.

It belongs to the SHMT family. Homodimer. It depends on pyridoxal 5'-phosphate as a cofactor.

It is found in the cytoplasm. The enzyme catalyses (6R)-5,10-methylene-5,6,7,8-tetrahydrofolate + glycine + H2O = (6S)-5,6,7,8-tetrahydrofolate + L-serine. It functions in the pathway one-carbon metabolism; tetrahydrofolate interconversion. It participates in amino-acid biosynthesis; glycine biosynthesis; glycine from L-serine: step 1/1. Functionally, catalyzes the reversible interconversion of serine and glycine with tetrahydrofolate (THF) serving as the one-carbon carrier. This reaction serves as the major source of one-carbon groups required for the biosynthesis of purines, thymidylate, methionine, and other important biomolecules. Also exhibits THF-independent aldolase activity toward beta-hydroxyamino acids, producing glycine and aldehydes, via a retro-aldol mechanism. In Persephonella marina (strain DSM 14350 / EX-H1), this protein is Serine hydroxymethyltransferase.